A 191-amino-acid polypeptide reads, in one-letter code: Fe/S biogenesis protein NfuA (191 aa).

Residues Cys-149 and Cys-152 each contribute to the [4Fe-4S] cluster site.

The protein belongs to the NfuA family. As to quaternary structure, homodimer. The cofactor is [4Fe-4S] cluster.

Functionally, involved in iron-sulfur cluster biogenesis. Binds a 4Fe-4S cluster, can transfer this cluster to apoproteins, and thereby intervenes in the maturation of Fe/S proteins. Could also act as a scaffold/chaperone for damaged Fe/S proteins. This chain is Fe/S biogenesis protein NfuA, found in Salmonella arizonae (strain ATCC BAA-731 / CDC346-86 / RSK2980).